The sequence spans 241 residues: Methylthioribulose-1-phosphate dehydratase (241 aa).

Residues 1-17 (MAKQVENNNNDHLVQST) are compositionally biased toward polar residues. The segment at 1-21 (MAKQVENNNNDHLVQSTDPEH) is disordered. A substrate-binding site is contributed by C100. Residues H117 and H119 each contribute to the Zn(2+) site. The active-site Proton donor/acceptor is E146. Zn(2+) is bound at residue H202.

This sequence belongs to the aldolase class II family. MtnB subfamily. Requires Zn(2+) as cofactor.

It is found in the cytoplasm. It carries out the reaction 5-(methylsulfanyl)-D-ribulose 1-phosphate = 5-methylsulfanyl-2,3-dioxopentyl phosphate + H2O. Its pathway is amino-acid biosynthesis; L-methionine biosynthesis via salvage pathway; L-methionine from S-methyl-5-thio-alpha-D-ribose 1-phosphate: step 2/6. In terms of biological role, catalyzes the dehydration of methylthioribulose-1-phosphate (MTRu-1-P) into 2,3-diketo-5-methylthiopentyl-1-phosphate (DK-MTP-1-P). The protein is Methylthioribulose-1-phosphate dehydratase of Aspergillus flavus (strain ATCC 200026 / FGSC A1120 / IAM 13836 / NRRL 3357 / JCM 12722 / SRRC 167).